A 180-amino-acid polypeptide reads, in one-letter code: Large ribosomal subunit protein uL5 (180 aa).

This sequence belongs to the universal ribosomal protein uL5 family. In terms of assembly, part of the 50S ribosomal subunit; part of the 5S rRNA/L5/L18/L25 subcomplex. Contacts the 5S rRNA and the P site tRNA. Forms a bridge to the 30S subunit in the 70S ribosome.

This is one of the proteins that bind and probably mediate the attachment of the 5S RNA into the large ribosomal subunit, where it forms part of the central protuberance. In the 70S ribosome it contacts protein S13 of the 30S subunit (bridge B1b), connecting the 2 subunits; this bridge is implicated in subunit movement. Contacts the P site tRNA; the 5S rRNA and some of its associated proteins might help stabilize positioning of ribosome-bound tRNAs. This Lacticaseibacillus casei (strain BL23) (Lactobacillus casei) protein is Large ribosomal subunit protein uL5.